Reading from the N-terminus, the 541-residue chain is Arginine--tRNA ligase (541 aa).

The short motif at 119-129 (ANPTGPLHIGH) is the 'HIGH' region element.

Belongs to the class-I aminoacyl-tRNA synthetase family. Monomer.

The protein localises to the cytoplasm. It carries out the reaction tRNA(Arg) + L-arginine + ATP = L-arginyl-tRNA(Arg) + AMP + diphosphate. This Helicobacter pylori (strain Shi470) protein is Arginine--tRNA ligase.